Consider the following 346-residue polypeptide: (R,R)-butanediol dehydrogenase (346 aa).

Positions 37, 70, and 152 each coordinate Zn(2+).

This sequence belongs to the zinc-containing alcohol dehydrogenase family. As to quaternary structure, homotetramer. Interacts with BrxC. Requires Zn(2+) as cofactor.

It is found in the cytoplasm. It localises to the secreted. The enzyme catalyses (R,R)-butane-2,3-diol + NAD(+) = (R)-acetoin + NADH + H(+). The protein is (R,R)-butanediol dehydrogenase of Bacillus subtilis (strain 168).